The following is a 99-amino-acid chain: MKSMIAVLLLALVATSMAGYLGLGYGGLYGAYGGLYGAGVPVGRAVAYSSSIRHPGFGGLGVLGGYGGYGYGLGLGAYGYGGYGLGYGLGLGLGHGKIW.

The signal sequence occupies residues 1–18; sequence MKSMIAVLLLALVATSMA.

This sequence belongs to the non-disulfide-bridged peptide (NDBP) superfamily. Expressed by the venom gland.

The protein resides in the secreted. This Lychas mucronatus (Chinese swimming scorpion) protein is Glycine-rich protein.